The following is a 1022-amino-acid chain: MLKIFEKVFGSKHDKDIKRIQPTIQRINEIQASFQSLSDEALREKGSLLRQQVRSRLLPLEQQKKELALKLENPDILPADADNINASLDALGEEYDKVTALALEESLPDVFALVKETCRRLKGHNYQVMGREMIWDMVPYDVQLIGGIVLHSGKITEMATGEGKTLVSTLPVFLNALTGRGVHVVTVNDYLAQRDKEWMNPVFAFHGLTVGVILNTMRPEERKRQYLCDVTYGTNNEFGFDYLRDNMAGTVEEMVQRDFYFAIVDEVDSVLIDEARTPLIISGPVPNADNSKFQEIKPWIEHLVRSQQQLVASCLVEAEKLLKTKPNDFQAGLALLRVKRGQPKNSRYIKMLSQQGIAKLVQSTENEYLKDNASQMHEVDDELYFAVDEKAGTIDLTDKGRAFLSKLSHQDTDLFLLPDVGTEIAAIEGSSSFSTAEKIKQKDAVYRLFADRSERLHNISQLLKAYSLFERDDEYVVQDGKVMIVDEFTGRILSGRRYSDGLHQAIEAKENVRIEGETQTMATITIQNFFRQYHKLAGMTGTAETEASEFYEIYKLDVVVIPTNKPVVRKDMDDLVYKTRREKYNAVVLKVEELQKKGQPVLVGTASVEVSETLSRMLRAKRIVHNVLNAKQNDREAEVVAEAGQRSAVTIATNMAGRGTDIKLGEGVRELGGLYILGSERHESRRIDRQLRGRAGRQGDPGESVFFVSLEDELMRLFGSERVISVMDKLGHEEGDVIEHSMITKSIERAQKKVEEQNFSIRKRLLEYDDVLNQQRDVIYTRRRNGLQKDRLRSDIFDLLEDYCDVVVKKYQKGADGMALEEQVLRELSVEFRPEKAEFNDDTVGGVADKLFNAAHDFYLRKEREVPEDIMRQIEKYAVLSVIDKKWRDHLREIDSLREGINLRAYGQKDPLLEYKQEAFRLFVELLREIELETLSLAFKLFPITPEEAHDIEVRQKKEALRTEKLVAQHEEAGSILSHESDVPSGTAAQQPIKADVKPGRNDLCPCGSGKKYKNCHGQQQP.

ATP-binding positions include Q143, 161 to 165 (GEGKT), and D661. The tract at residues 973 to 1001 (AGSILSHESDVPSGTAAQQPIKADVKPGR) is disordered. Zn(2+)-binding residues include C1005, C1007, C1016, and H1017.

Belongs to the SecA family. In terms of assembly, monomer and homodimer. Part of the essential Sec protein translocation apparatus which comprises SecA, SecYEG and auxiliary proteins SecDF. Other proteins may also be involved. The cofactor is Zn(2+).

The protein resides in the cell inner membrane. Its subcellular location is the cytoplasm. The enzyme catalyses ATP + H2O + cellular proteinSide 1 = ADP + phosphate + cellular proteinSide 2.. Functionally, part of the Sec protein translocase complex. Interacts with the SecYEG preprotein conducting channel. Has a central role in coupling the hydrolysis of ATP to the transfer of proteins into and across the cell membrane, serving as an ATP-driven molecular motor driving the stepwise translocation of polypeptide chains across the membrane. The sequence is that of Protein translocase subunit SecA from Chlorobium phaeobacteroides (strain DSM 266 / SMG 266 / 2430).